The following is a 545-amino-acid chain: Chaperonin GroEL (545 aa).

Residues 29-32 (TMGP), Lys50, 86-90 (DGTTT), Gly414, 477-479 (DAA), and Asp493 each bind ATP.

This sequence belongs to the chaperonin (HSP60) family. As to quaternary structure, forms a cylinder of 14 subunits composed of two heptameric rings stacked back-to-back. Interacts with the co-chaperonin GroES.

The protein resides in the cytoplasm. The catalysed reaction is ATP + H2O + a folded polypeptide = ADP + phosphate + an unfolded polypeptide.. Together with its co-chaperonin GroES, plays an essential role in assisting protein folding. The GroEL-GroES system forms a nano-cage that allows encapsulation of the non-native substrate proteins and provides a physical environment optimized to promote and accelerate protein folding. The sequence is that of Chaperonin GroEL from Campylobacter lari (strain RM2100 / D67 / ATCC BAA-1060).